The chain runs to 239 residues: Fatty acid metabolism regulator protein (239 aa).

The HTH gntR-type domain maps to 6-74 (QSPAGFAEEY…HGKPTKVNNF (69 aa)). A DNA-binding region (H-T-H motif) is located at residues 34-53 (ERELSELIGVTRTTLREVLQ).

Homodimer.

Its subcellular location is the cytoplasm. Functionally, multifunctional regulator of fatty acid metabolism. The protein is Fatty acid metabolism regulator protein of Yersinia enterocolitica serotype O:8 / biotype 1B (strain NCTC 13174 / 8081).